The chain runs to 440 residues: Tyrosine--tRNA ligase (440 aa).

Y46 serves as a coordination point for L-tyrosine. A 'HIGH' region motif is present at residues 51-60; that stretch reads PTAASLHIGN. Positions 181 and 185 each coordinate L-tyrosine. A 'KMSKS' region motif is present at residues 241 to 245; it reads KFGKS. Residue K244 participates in ATP binding. The 67-residue stretch at 373-439 folds into the S4 RNA-binding domain; that stretch reads DRVIDAAQAA…GKKALGAVEN (67 aa).

The protein belongs to the class-I aminoacyl-tRNA synthetase family. TyrS type 1 subfamily. In terms of assembly, homodimer.

The protein resides in the cytoplasm. The enzyme catalyses tRNA(Tyr) + L-tyrosine + ATP = L-tyrosyl-tRNA(Tyr) + AMP + diphosphate + H(+). Functionally, catalyzes the attachment of tyrosine to tRNA(Tyr) in a two-step reaction: tyrosine is first activated by ATP to form Tyr-AMP and then transferred to the acceptor end of tRNA(Tyr). This is Tyrosine--tRNA ligase from Bifidobacterium longum subsp. infantis (strain ATCC 15697 / DSM 20088 / JCM 1222 / NCTC 11817 / S12).